Reading from the N-terminus, the 249-residue chain is MEATFATAAAFQSIVGALRGLLTHATFDCDAHGMRLHSLDVERVALADLRLRRAGFARYACERKLSFSVPVRGLVKIVRTADPSAPLTMRVAARDDRVRLAYETARRAVSCTLAQISLDADRLGVPDKEYTCVLAVPSAELTRACADLARLGATTVEMSSGTTGLSFAAHADDGVRVRVLLRGSPQRPLTQAFACCYLNKLARASALSETVDVCMDASMPLRLRFRLGPLGALDLYLAPRVPSVGESAQ.

Residues 60–79 (ACERKLSFSVPVRGLVKIVR) mediate DNA binding.

This sequence belongs to the PCNA family.

Sliding clamp subunit. Responsible for tethering the catalytic subunit of DNA polymerase to DNA during high-speed replication. This is Probable DNA polymerase sliding clamp (PCNA) from Orgyia pseudotsugata multicapsid polyhedrosis virus (OpMNPV).